A 60-amino-acid polypeptide reads, in one-letter code: Short neurotoxin C (60 aa).

Intrachain disulfides connect C3–C22, C17–C39, C41–C52, and C53–C58.

Belongs to the three-finger toxin family. Short-chain subfamily. Type I alpha-neurotoxin sub-subfamily. Expressed by the venom gland.

It localises to the secreted. Binds to muscle nicotinic acetylcholine receptor (nAChR) and inhibit acetylcholine from binding to the receptor, thereby impairing neuromuscular transmission. This is Short neurotoxin C from Aipysurus laevis (Olive sea snake).